The primary structure comprises 387 residues: Mannitol-1-phosphate 5-dehydrogenase (387 aa).

Residue 3 to 14 coordinates NAD(+); it reads AVHFGAGNIGRG.

The protein belongs to the mannitol dehydrogenase family.

The enzyme catalyses D-mannitol 1-phosphate + NAD(+) = beta-D-fructose 6-phosphate + NADH + H(+). This chain is Mannitol-1-phosphate 5-dehydrogenase, found in Pseudarthrobacter chlorophenolicus (strain ATCC 700700 / DSM 12829 / CIP 107037 / JCM 12360 / KCTC 9906 / NCIMB 13794 / A6) (Arthrobacter chlorophenolicus).